Here is a 381-residue protein sequence, read N- to C-terminus: UDP-N-acetylglucosamine--N-acetylmuramyl-(pentapeptide) pyrophosphoryl-undecaprenol N-acetylglucosamine transferase (381 aa).

UDP-N-acetyl-alpha-D-glucosamine contacts are provided by residues 10 to 12 (TGG), Asn-124, Arg-165, Ser-190, Ile-245, and Gln-290. The interval 361-381 (WGSPAGQERPGHGPVRPPDLA) is disordered.

The protein belongs to the glycosyltransferase 28 family. MurG subfamily.

It localises to the cell inner membrane. The catalysed reaction is di-trans,octa-cis-undecaprenyl diphospho-N-acetyl-alpha-D-muramoyl-L-alanyl-D-glutamyl-meso-2,6-diaminopimeloyl-D-alanyl-D-alanine + UDP-N-acetyl-alpha-D-glucosamine = di-trans,octa-cis-undecaprenyl diphospho-[N-acetyl-alpha-D-glucosaminyl-(1-&gt;4)]-N-acetyl-alpha-D-muramoyl-L-alanyl-D-glutamyl-meso-2,6-diaminopimeloyl-D-alanyl-D-alanine + UDP + H(+). The protein operates within cell wall biogenesis; peptidoglycan biosynthesis. Cell wall formation. Catalyzes the transfer of a GlcNAc subunit on undecaprenyl-pyrophosphoryl-MurNAc-pentapeptide (lipid intermediate I) to form undecaprenyl-pyrophosphoryl-MurNAc-(pentapeptide)GlcNAc (lipid intermediate II). The sequence is that of UDP-N-acetylglucosamine--N-acetylmuramyl-(pentapeptide) pyrophosphoryl-undecaprenol N-acetylglucosamine transferase from Anaeromyxobacter sp. (strain Fw109-5).